Consider the following 199-residue polypeptide: Imidazoleglycerol-phosphate dehydratase (199 aa).

The protein belongs to the imidazoleglycerol-phosphate dehydratase family.

It localises to the cytoplasm. The catalysed reaction is D-erythro-1-(imidazol-4-yl)glycerol 3-phosphate = 3-(imidazol-4-yl)-2-oxopropyl phosphate + H2O. The protein operates within amino-acid biosynthesis; L-histidine biosynthesis; L-histidine from 5-phospho-alpha-D-ribose 1-diphosphate: step 6/9. This is Imidazoleglycerol-phosphate dehydratase from Paramagnetospirillum magneticum (strain ATCC 700264 / AMB-1) (Magnetospirillum magneticum).